A 342-amino-acid polypeptide reads, in one-letter code: Dihydroorotate dehydrogenase (quinone) (342 aa).

Residues 61–65 and Thr-85 each bind FMN; that span reads AGLDK. Position 65 (Lys-65) interacts with substrate. 110 to 114 lines the substrate pocket; it reads NRMGF. The FMN site is built by Asn-138 and Asn-171. Position 171 (Asn-171) interacts with substrate. Ser-174 acts as the Nucleophile in catalysis. Asn-176 provides a ligand contact to substrate. Positions 216 and 244 each coordinate FMN. 245 to 246 provides a ligand contact to substrate; sequence NT. FMN is bound by residues Gly-267, Gly-296, and 317 to 318; that span reads YS.

It belongs to the dihydroorotate dehydrogenase family. Type 2 subfamily. In terms of assembly, monomer. FMN is required as a cofactor.

It localises to the cell membrane. The catalysed reaction is (S)-dihydroorotate + a quinone = orotate + a quinol. The protein operates within pyrimidine metabolism; UMP biosynthesis via de novo pathway; orotate from (S)-dihydroorotate (quinone route): step 1/1. Catalyzes the conversion of dihydroorotate to orotate with quinone as electron acceptor. The sequence is that of Dihydroorotate dehydrogenase (quinone) from Cellvibrio japonicus (strain Ueda107) (Pseudomonas fluorescens subsp. cellulosa).